Here is a 488-residue protein sequence, read N- to C-terminus: pH-response regulator protein palC (488 aa).

The BRO1 domain maps to 2-430; sequence PPYLYRLPTT…TVAFQPVPPV (429 aa). Positions 449-488 are disordered; it reads PPPSKFSPSRIGHLNEEQGNDSPELGETEDTSYAGKGNYF.

This sequence belongs to the palC family.

Required for the proteolytic cleavage of the transcription factor RIM101 in response to alkaline ambient pH. In Cryptococcus neoformans var. neoformans serotype D (strain B-3501A) (Filobasidiella neoformans), this protein is pH-response regulator protein palC.